We begin with the raw amino-acid sequence, 66 residues long: Alpha-conotoxin GIB (66 aa).

Residues 1-21 form the signal peptide; that stretch reads MGMRMMFTVFLLVVLATTVVS. A propeptide spanning residues 22 to 49 is cleaved from the precursor; sequence FPSERASDGRDDTAKDEGSDMEKLVEKK. 2 disulfides stabilise this stretch: C51–C56 and C52–C62. Residue G64 is modified to Glycine amide.

This sequence belongs to the conotoxin A superfamily. In terms of tissue distribution, expressed by the venom duct.

It localises to the secreted. In terms of biological role, alpha-conotoxins act on postsynaptic membranes, they bind to the nicotinic acetylcholine receptors (nAChR) and thus inhibit them. Both the globular (with C1-C3; C2-C4 disulfide pattern) and ribbon (C1-C4; C2-C3) isomers reversibly inhibit human muscle-type alpha-1-beta-1-delta-epsilon/CHRNA1-CHRNB1-CHRND-CHRNE nAChRs (IC(50)=116 nM and IC(50)=643 nM, respectively). Both isomers also inhibit alpha-7/CHRNA7 and alpha-9-alpha-10/CHRNA9-CHRNA10 (IC(50)=1113 nM by globular isomer) nAChRs. This chain is Alpha-conotoxin GIB, found in Conus geographus (Geography cone).